Consider the following 33-residue polypeptide: Cytochrome b6-f complex subunit 8 (33 aa).

Residues 2 to 22 (LITLGWASLAALFSFSIAMVV) form a helical membrane-spanning segment.

Belongs to the PetN family. The 4 large subunits of the cytochrome b6-f complex are cytochrome b6, subunit IV (17 kDa polypeptide, PetD), cytochrome f and the Rieske protein, while the 4 small subunits are PetG, PetL, PetM and PetN. The complex functions as a dimer.

Its subcellular location is the plastid. It localises to the organellar chromatophore thylakoid membrane. Its function is as follows. Component of the cytochrome b6-f complex, which mediates electron transfer between photosystem II (PSII) and photosystem I (PSI), cyclic electron flow around PSI, and state transitions. In Paulinella chromatophora, this protein is Cytochrome b6-f complex subunit 8.